Here is a 182-residue protein sequence, read N- to C-terminus: ATP-dependent protease subunit HslV (182 aa).

T10 is a catalytic residue. A166, C169, and S172 together coordinate Na(+).

This sequence belongs to the peptidase T1B family. HslV subfamily. In terms of assembly, a double ring-shaped homohexamer of HslV is capped on each side by a ring-shaped HslU homohexamer. The assembly of the HslU/HslV complex is dependent on binding of ATP.

It is found in the cytoplasm. The enzyme catalyses ATP-dependent cleavage of peptide bonds with broad specificity.. Allosterically activated by HslU binding. Its function is as follows. Protease subunit of a proteasome-like degradation complex believed to be a general protein degrading machinery. The sequence is that of ATP-dependent protease subunit HslV from Rickettsia felis (strain ATCC VR-1525 / URRWXCal2) (Rickettsia azadi).